Reading from the N-terminus, the 517-residue chain is RNA-binding region-containing protein 3 (517 aa).

The segment at 1-26 is disordered; that stretch reads MAAPEQPLAISRGCTSSSSLSPPRGD. S21 bears the Phosphoserine mark. Residues 27–102 form the RRM 1 domain; that stretch reads RTLLVRHLPA…HTLVVEFAKE (76 aa). 2 disordered regions span residues 106 to 130 and 213 to 254; these read VHSP…DDKE and MPLH…DEDR. A Phosphoserine modification is found at S108. The segment covering 115–130 has biased composition (basic and acidic residues); it reads SEKKKRSDDPVEDDKE. The span at 217–230 shows a compositional bias: pro residues; sequence APLPPTSPQPPEEP. Residues 231–252 show a composition bias toward acidic residues; the sequence is PLPEEDEELSSEESEYESTDDE. The 84-residue stretch at 420 to 503 folds into the RRM 2 domain; it reads CRIYVKNLAK…KPMVVQFARS (84 aa).

In terms of assembly, component of the U11/U12 snRNPs that are part of the U12-type spliceosome. Found in a complex with m(7)G-capped U12 snRNA. Interacts with PDCD7.

The protein localises to the nucleus. Its function is as follows. Participates in pre-mRNA U12-dependent splicing, performed by the minor spliceosome which removes U12-type introns. U12-type introns comprises less than 1% of all non-coding sequences. Binds to the 3'-stem-loop of m(7)G-capped U12 snRNA. The polypeptide is RNA-binding region-containing protein 3 (RNPC3) (Pongo abelii (Sumatran orangutan)).